A 303-amino-acid polypeptide reads, in one-letter code: Methionyl-tRNA formyltransferase (303 aa).

108–111 provides a ligand contact to (6S)-5,6,7,8-tetrahydrofolate; sequence SDLP.

Belongs to the Fmt family.

The catalysed reaction is L-methionyl-tRNA(fMet) + (6R)-10-formyltetrahydrofolate = N-formyl-L-methionyl-tRNA(fMet) + (6S)-5,6,7,8-tetrahydrofolate + H(+). In terms of biological role, attaches a formyl group to the free amino group of methionyl-tRNA(fMet). The formyl group appears to play a dual role in the initiator identity of N-formylmethionyl-tRNA by promoting its recognition by IF2 and preventing the misappropriation of this tRNA by the elongation apparatus. The sequence is that of Methionyl-tRNA formyltransferase from Rickettsia africae (strain ESF-5).